Reading from the N-terminus, the 210-residue chain is Ribonuclease HII (210 aa).

Positions 2–203 constitute an RNase H type-2 domain; the sequence is SGVMGIDEAG…YKRVESEVKQ (202 aa). Residues D8, E9, and D99 each contribute to the a divalent metal cation site.

This sequence belongs to the RNase HII family. The cofactor is Mn(2+). Mg(2+) is required as a cofactor.

Its subcellular location is the cytoplasm. It carries out the reaction Endonucleolytic cleavage to 5'-phosphomonoester.. Endonuclease that specifically degrades the RNA of RNA-DNA hybrids. This Methanopyrus kandleri (strain AV19 / DSM 6324 / JCM 9639 / NBRC 100938) protein is Ribonuclease HII.